The sequence spans 227 residues: ATP synthase F(0) complex subunit a (227 aa).

6 consecutive transmembrane segments (helical) span residues L14–P34, W69–L89, Q98–L118, E132–I152, F180–L200, and L202–Y222.

Belongs to the ATPase A chain family. Component of the ATP synthase complex composed at least of ATP5F1A/subunit alpha, ATP5F1B/subunit beta, ATP5MC1/subunit c (homooctomer), MT-ATP6/subunit a, MT-ATP8/subunit 8, ATP5ME/subunit e, ATP5MF/subunit f, ATP5MG/subunit g, ATP5MK/subunit k, ATP5MJ/subunit j, ATP5F1C/subunit gamma, ATP5F1D/subunit delta, ATP5F1E/subunit epsilon, ATP5PF/subunit F6, ATP5PB/subunit b, ATP5PD/subunit d, ATP5PO/subunit OSCP. ATP synthase complex consists of a soluble F(1) head domain (subunits alpha(3) and beta(3)) - the catalytic core - and a membrane F(0) domain - the membrane proton channel (subunits c, a, 8, e, f, g, k and j). These two domains are linked by a central stalk (subunits gamma, delta, and epsilon) rotating inside the F1 region and a stationary peripheral stalk (subunits F6, b, d, and OSCP). Interacts with DNAJC30; interaction is direct.

It is found in the mitochondrion inner membrane. The catalysed reaction is H(+)(in) = H(+)(out). Subunit a, of the mitochondrial membrane ATP synthase complex (F(1)F(0) ATP synthase or Complex V) that produces ATP from ADP in the presence of a proton gradient across the membrane which is generated by electron transport complexes of the respiratory chain. ATP synthase complex consist of a soluble F(1) head domain - the catalytic core - and a membrane F(1) domain - the membrane proton channel. These two domains are linked by a central stalk rotating inside the F(1) region and a stationary peripheral stalk. During catalysis, ATP synthesis in the catalytic domain of F(1) is coupled via a rotary mechanism of the central stalk subunits to proton translocation. With the subunit c (ATP5MC1), forms the proton-conducting channel in the F(0) domain, that contains two crucial half-channels (inlet and outlet) that facilitate proton movement from the mitochondrial intermembrane space (IMS) into the matrix. Protons are taken up via the inlet half-channel and released through the outlet half-channel, following a Grotthuss mechanism. In Tetraodon nigroviridis (Spotted green pufferfish), this protein is ATP synthase F(0) complex subunit a.